The chain runs to 179 residues: Large ribosomal subunit protein uL5 (179 aa).

Lys3 is subject to N6-acetyllysine.

It belongs to the universal ribosomal protein uL5 family. Part of the 50S ribosomal subunit; part of the 5S rRNA/L5/L18/L25 subcomplex. Contacts the 5S rRNA and the P site tRNA. Forms a bridge to the 30S subunit in the 70S ribosome.

Functionally, this is one of the proteins that bind and probably mediate the attachment of the 5S RNA into the large ribosomal subunit, where it forms part of the central protuberance. In the 70S ribosome it contacts protein S13 of the 30S subunit (bridge B1b), connecting the 2 subunits; this bridge is implicated in subunit movement. Contacts the P site tRNA; the 5S rRNA and some of its associated proteins might help stabilize positioning of ribosome-bound tRNAs. This is Large ribosomal subunit protein uL5 from Escherichia coli O45:K1 (strain S88 / ExPEC).